A 178-amino-acid polypeptide reads, in one-letter code: ATP synthase subunit delta (178 aa).

The protein belongs to the ATPase delta chain family. F-type ATPases have 2 components, F(1) - the catalytic core - and F(0) - the membrane proton channel. F(1) has five subunits: alpha(3), beta(3), gamma(1), delta(1), epsilon(1). F(0) has three main subunits: a(1), b(2) and c(10-14). The alpha and beta chains form an alternating ring which encloses part of the gamma chain. F(1) is attached to F(0) by a central stalk formed by the gamma and epsilon chains, while a peripheral stalk is formed by the delta and b chains.

Its subcellular location is the cell membrane. F(1)F(0) ATP synthase produces ATP from ADP in the presence of a proton or sodium gradient. F-type ATPases consist of two structural domains, F(1) containing the extramembraneous catalytic core and F(0) containing the membrane proton channel, linked together by a central stalk and a peripheral stalk. During catalysis, ATP synthesis in the catalytic domain of F(1) is coupled via a rotary mechanism of the central stalk subunits to proton translocation. Functionally, this protein is part of the stalk that links CF(0) to CF(1). It either transmits conformational changes from CF(0) to CF(1) or is implicated in proton conduction. In Streptococcus equi subsp. zooepidemicus (strain MGCS10565), this protein is ATP synthase subunit delta.